A 345-amino-acid polypeptide reads, in one-letter code: Fe-S cluster assembly protein DRE2 (345 aa).

An N-terminal SAM-like domain region spans residues 11 to 166 (FSHSSNGVVL…SIGSSSGSSS (156 aa)). The tract at residues 147–166 (SKPATASSSFSIGSSSGSSS) is disordered. Positions 153–166 (SSSFSIGSSSGSSS) are enriched in low complexity. Residues 167-210 (ALPLRRKLGSGASANAKKSLWATQPASANDLIDEASLLRDADFV) are linker. [2Fe-2S] cluster-binding residues include cysteine 220, cysteine 233, cysteine 236, and cysteine 238. A fe-S binding site A region spans residues 220–238 (CDVGAGQGKKKKACKGCTC). [4Fe-4S] cluster contacts are provided by cysteine 307, cysteine 310, cysteine 318, and cysteine 321. Short sequence motifs (cx2C motif) lie at residues 307-310 (CGSC) and 318-321 (CSSC). Residues 307-321 (CGSCFLGDAFRCSSC) form a fe-S binding site B region.

The protein belongs to the anamorsin family. Monomer. Interacts with TAH18. Interacts with MIA40. It depends on [2Fe-2S] cluster as a cofactor. [4Fe-4S] cluster serves as cofactor.

The protein resides in the cytoplasm. The protein localises to the mitochondrion intermembrane space. Functionally, component of the cytosolic iron-sulfur (Fe-S) protein assembly (CIA) machinery required for the maturation of extramitochondrial Fe-S proteins. Part of an electron transfer chain functioning in an early step of cytosolic Fe-S biogenesis, facilitating the de novo assembly of a [4Fe-4S] cluster on the scaffold complex CFD1-NBP35. Electrons are transferred to DRE2 from NADPH via the FAD- and FMN-containing protein TAH18. TAH18-DRE2 are also required for the assembly of the diferric tyrosyl radical cofactor of ribonucleotide reductase (RNR), probably by providing electrons for reduction during radical cofactor maturation in the catalytic small subunit RNR2. This is Fe-S cluster assembly protein DRE2 from Mycosarcoma maydis (Corn smut fungus).